Here is a 214-residue protein sequence, read N- to C-terminus: CRISPR-associated protein Cas5 (214 aa).

This sequence belongs to the CRISPR-associated protein Cas5 family.

Functionally, CRISPR (clustered regularly interspaced short palindromic repeat) is an adaptive immune system that provides protection against mobile genetic elements (viruses, transposable elements and conjugative plasmids). CRISPR clusters contain spacers, sequences complementary to antecedent mobile elements, and target invading nucleic acids. CRISPR clusters are transcribed and processed into CRISPR RNA (crRNA). Has a role in fruiting body development, sporulation and aggregation. The chain is CRISPR-associated protein Cas5 (devS) from Myxococcus xanthus (strain DK1622).